A 339-amino-acid polypeptide reads, in one-letter code: Phenylalanine--tRNA ligase alpha subunit (339 aa).

Glu250 lines the Mg(2+) pocket.

It belongs to the class-II aminoacyl-tRNA synthetase family. Phe-tRNA synthetase alpha subunit type 1 subfamily. Tetramer of two alpha and two beta subunits. Mg(2+) serves as cofactor.

It is found in the cytoplasm. The enzyme catalyses tRNA(Phe) + L-phenylalanine + ATP = L-phenylalanyl-tRNA(Phe) + AMP + diphosphate + H(+). This Parabacteroides distasonis (strain ATCC 8503 / DSM 20701 / CIP 104284 / JCM 5825 / NCTC 11152) protein is Phenylalanine--tRNA ligase alpha subunit.